The sequence spans 285 residues: Probable endonuclease 4 (285 aa).

His-69, His-109, Glu-145, Asp-179, His-182, His-216, Asp-229, His-231, and Glu-261 together coordinate Zn(2+).

Belongs to the AP endonuclease 2 family. Requires Zn(2+) as cofactor.

It catalyses the reaction Endonucleolytic cleavage to 5'-phosphooligonucleotide end-products.. Its function is as follows. Endonuclease IV plays a role in DNA repair. It cleaves phosphodiester bonds at apurinic or apyrimidinic (AP) sites, generating a 3'-hydroxyl group and a 5'-terminal sugar phosphate. In Shigella flexneri serotype 5b (strain 8401), this protein is Probable endonuclease 4.